The chain runs to 82 residues: MLVIFLGILGLLANQVSSQLVGQLHPTENPSENELEYWCTYMECCQFCWDCQNGLCVNKLGNTTILENEYVHPCIVSRWLNK.

Positions 1 to 28 are cleaved as a signal peptide; it reads MLVIFLGILGLLANQVSSQLVGQLHPTE. Asn62 carries N-linked (GlcNAc...) asparagine; by host glycosylation.

This sequence belongs to the asfivirus MGF 110 family.

Its function is as follows. Plays a role in virus cell tropism, and may be required for efficient virus replication in macrophages. In Ornithodoros (relapsing fever ticks), this protein is Protein MGF 110-5L.